The primary structure comprises 384 residues: 23S rRNA (uracil(747)-C(5))-methyltransferase RlmC (384 aa).

[4Fe-4S] cluster is bound by residues Cys7, Cys15, Cys18, and Cys94. S-adenosyl-L-methionine is bound by residues Gln219, Phe248, Glu269, and Asn316. Cys343 serves as the catalytic Nucleophile.

Belongs to the class I-like SAM-binding methyltransferase superfamily. RNA M5U methyltransferase family. RlmC subfamily.

It catalyses the reaction uridine(747) in 23S rRNA + S-adenosyl-L-methionine = 5-methyluridine(747) in 23S rRNA + S-adenosyl-L-homocysteine + H(+). Catalyzes the formation of 5-methyl-uridine at position 747 (m5U747) in 23S rRNA. This Shewanella sp. (strain ANA-3) protein is 23S rRNA (uracil(747)-C(5))-methyltransferase RlmC.